The primary structure comprises 580 residues: Extracellular protease (580 aa).

Positions 1 to 32 are cleaved as a signal peptide; the sequence is MSTASLRKRTGSLTILGASALTSLLLAMPAFA. The propeptide occupies 33 to 136; that stretch reads GEVYLDGLAT…VEVDQILHAT (104 aa). The region spanning 147-465 is the Peptidase S8 domain; it reads QWAFGTTNAG…AGIVNADAAV (319 aa). Catalysis depends on charge relay system residues aspartate 177 and histidine 237. 2 disulfides stabilise this stretch: cysteine 225–cysteine 273 and cysteine 315–cysteine 352. Catalysis depends on serine 409, which acts as the Charge relay system. Cysteine 450 and cysteine 454 are oxidised to a cystine.

It belongs to the peptidase S8 family.

The protein resides in the secreted. The chain is Extracellular protease from Xanthomonas campestris pv. campestris (strain ATCC 33913 / DSM 3586 / NCPPB 528 / LMG 568 / P 25).